We begin with the raw amino-acid sequence, 394 residues long: Dual specificity protein phosphatase 4 (394 aa).

Val-2 is modified (N-acetylvaline). In terms of domain architecture, Rhodanese spans Ser-41–Ser-159. Residues Gly-195 to Ala-336 enclose the Tyrosine-protein phosphatase domain. The active-site Phosphocysteine intermediate is the Cys-280. A phosphoserine; by MAPK mark is found at Ser-386 and Ser-391.

Belongs to the protein-tyrosine phosphatase family. Non-receptor class dual specificity subfamily. Hollow spherical complex composed of 24 subunits with pseudooctahedral symmetry, has a tetramer as the basic unit. Phosphorylation in the C-terminus by ERK1/2 inhibits proteasomal degradation and stabilizes the protein.

The protein resides in the nucleus. The catalysed reaction is O-phospho-L-tyrosyl-[protein] + H2O = L-tyrosyl-[protein] + phosphate. It carries out the reaction O-phospho-L-seryl-[protein] + H2O = L-seryl-[protein] + phosphate. The enzyme catalyses O-phospho-L-threonyl-[protein] + H2O = L-threonyl-[protein] + phosphate. Functionally, regulates mitogenic signal transduction by dephosphorylating both Thr and Tyr residues on MAP kinases ERK1 and ERK2. In Homo sapiens (Human), this protein is Dual specificity protein phosphatase 4 (DUSP4).